The following is a 472-amino-acid chain: Ribosomal RNA small subunit methyltransferase F (472 aa).

Residues 123 to 129 (AAAPGSK), Glu147, Asp174, and Asp192 each bind S-adenosyl-L-methionine. The active-site Nucleophile is Cys245.

This sequence belongs to the class I-like SAM-binding methyltransferase superfamily. RsmB/NOP family.

The protein localises to the cytoplasm. The enzyme catalyses cytidine(1407) in 16S rRNA + S-adenosyl-L-methionine = 5-methylcytidine(1407) in 16S rRNA + S-adenosyl-L-homocysteine + H(+). In terms of biological role, specifically methylates the cytosine at position 1407 (m5C1407) of 16S rRNA. This chain is Ribosomal RNA small subunit methyltransferase F, found in Vibrio vulnificus (strain CMCP6).